Here is a 265-residue protein sequence, read N- to C-terminus: Pyrroline-5-carboxylate reductase (265 aa).

It belongs to the pyrroline-5-carboxylate reductase family.

It localises to the cytoplasm. It catalyses the reaction L-proline + NADP(+) = (S)-1-pyrroline-5-carboxylate + NADPH + 2 H(+). The catalysed reaction is L-proline + NAD(+) = (S)-1-pyrroline-5-carboxylate + NADH + 2 H(+). It functions in the pathway amino-acid biosynthesis; L-proline biosynthesis; L-proline from L-glutamate 5-semialdehyde: step 1/1. Its function is as follows. Catalyzes the reduction of 1-pyrroline-5-carboxylate (PCA) to L-proline. The protein is Pyrroline-5-carboxylate reductase of Aquifex aeolicus (strain VF5).